Reading from the N-terminus, the 232-residue chain is Lipoprotein-releasing system ATP-binding protein LolD (232 aa).

The ABC transporter domain occupies 11–231 (VYLHDIKRQY…SIEDGVIVEL (221 aa)). 47-54 (APSGSGKS) lines the ATP pocket.

The protein belongs to the ABC transporter superfamily. Lipoprotein translocase (TC 3.A.1.125) family. In terms of assembly, the complex is composed of two ATP-binding proteins (LolD) and two transmembrane proteins (LolC and LolE).

The protein localises to the cell inner membrane. Functionally, part of the ABC transporter complex LolCDE involved in the translocation of mature outer membrane-directed lipoproteins, from the inner membrane to the periplasmic chaperone, LolA. Responsible for the formation of the LolA-lipoprotein complex in an ATP-dependent manner. The chain is Lipoprotein-releasing system ATP-binding protein LolD from Rhodopseudomonas palustris (strain BisB5).